Here is a 575-residue protein sequence, read N- to C-terminus: Cytokinin dehydrogenase 1 (575 aa).

The first 31 residues, 1–31, serve as a signal peptide directing secretion; it reads MGLTSSLRFHRQNNKTFLGIFMILVLSCIPG. 3 N-linked (GlcNAc...) asparagine glycosylation sites follow: N14, N38, and N115. Positions 84–262 constitute an FAD-binding PCMH-type domain; that stretch reads YQLPPLAILH…TRARISLEPA (179 aa). Residues A120, G122, and G124 each coordinate FAD. Position 125 is a pros-8alpha-FAD histidine (H125). Residues S126, Q130, D186, T191, S197, I201, and I252 each contribute to the FAD site. 4 N-linked (GlcNAc...) asparagine glycosylation sites follow: N303, N318, N437, and N467. Residues Y498 and Q536 each contribute to the FAD site.

This sequence belongs to the oxygen-dependent FAD-linked oxidoreductase family. FAD is required as a cofactor. As to expression, expressed in shoot apexes, lateral shoot meristems, growing tissues of young flowers, and weakly at the root-hypocotyl junction.

It localises to the vacuole. The catalysed reaction is N(6)-dimethylallyladenine + A + H2O = 3-methyl-2-butenal + adenine + AH2. Catalyzes the oxidation of cytokinins, a family of N(6)-substituted adenine derivatives that are plant hormones, where the substituent is an isopentenyl group. Catalyzes in vitro the oxidation of various types of cytokinin nucleotides that are known as direct products of cytokinin biosynthesis. Promotes adventitious root initiation downstream of MYC2-dependent jasmonate signaling. Cytokinin degraded by CKX1 is required for cell division in the female gametophyte by modulating the expression of cell cycle genes. This Arabidopsis thaliana (Mouse-ear cress) protein is Cytokinin dehydrogenase 1 (CKX1).